Reading from the N-terminus, the 98-residue chain is Thrombin-like enzyme cerastotin (98 aa).

The 98-residue stretch at 1–98 folds into the Peptidase S1 domain; sequence VIGGAECNIN…IKKPVNGSTH (98 aa). Residues H41 and D85 each act as charge relay system in the active site. An N-linked (GlcNAc...) asparagine glycan is attached at N94.

This sequence belongs to the peptidase S1 family. Snake venom subfamily. As to quaternary structure, monomer. Expressed by the venom gland.

The protein localises to the secreted. Its activity is regulated as follows. Inhibited by PMSF. In terms of biological role, thrombin-like snake venom serine protease that preferentially cleaves the alpha-chain of fibrinogen (FGA). Induce platelet aggregation in the presence of exogenous fibrinogen. Possesses esterase and amidolytic activities. The polypeptide is Thrombin-like enzyme cerastotin (Cerastes cerastes (Horned desert viper)).